The sequence spans 314 residues: Probable cell division protein WhiA (314 aa).

Positions 277–311 (TLKELGEKMPSGAISKSGINHRLRKLNQLAEGYQQ) form a DNA-binding region, H-T-H motif.

This sequence belongs to the WhiA family.

Its function is as follows. Involved in cell division and chromosome segregation. The chain is Probable cell division protein WhiA from Latilactobacillus sakei subsp. sakei (strain 23K) (Lactobacillus sakei subsp. sakei).